Here is a 1331-residue protein sequence, read N- to C-terminus: ABC multidrug transporter MDR2 (1331 aa).

Composition is skewed to basic and acidic residues over residues 1–20 (MVEV…KQEN) and 31–41 (SDKEKVAKKGN). The segment at 1–51 (MVEVSEKPNTQDDGVSKQENRNPASSSSSTSDKEKVAKKGNSDATKSSTPE) is disordered. The next 4 membrane-spanning stretches (helical) occupy residues 93-113 (MIFL…LPLF), 147-167 (YFVY…VGFI), 219-239 (KVGL…IGYV), and 242-262 (WKLA…MGGI). Residues 97–387 (AIVSLASIAA…VAPNTQAFAS (291 aa)) enclose the ABC transmembrane type-1 1 domain. N-linked (GlcNAc...) asparagine glycosylation occurs at Asn293. 2 helical membrane-spanning segments follow: residues 325 to 345 (LGIM…LGFW) and 358 to 378 (LSAI…IGNV). The ABC transporter 1 domain maps to 422 to 667 (IEFRGIKHIY…KGTYLQLVEA (246 aa)). 457 to 464 (GPSGSGKS) is a binding site for ATP. N-linked (GlcNAc...) asparagine glycans are attached at residues Asn529 and Asn737. 2 consecutive transmembrane segments (helical) span residues 762–782 (LCGF…SVFF) and 810–830 (FLML…IFAI). One can recognise an ABC transmembrane type-1 2 domain in the interval 764 to 1051 (GFFFAVLSGA…VFSFSPDMGK (288 aa)). The N-linked (GlcNAc...) asparagine glycan is linked to Asn860. 4 consecutive transmembrane segments (helical) span residues 884-904 (LGTI…ALAF), 910-930 (LVCI…FWIL), 995-1015 (ASQS…GGLL), and 1025-1045 (FFLC…VFSF). The ABC transporter 2 domain maps to 1086 to 1324 (IEFRDVHFRY…KGRYYELVHM (239 aa)). The N-linked (GlcNAc...) asparagine glycan is linked to Asn1108. 1121–1128 (GPSGCGKS) is a binding site for ATP.

This sequence belongs to the ABC transporter superfamily. ABCB family. Multidrug resistance exporter (TC 3.A.1.201) subfamily.

The protein localises to the cell membrane. It catalyses the reaction itraconazole(in) + ATP + H2O = itraconazole(out) + ADP + phosphate + H(+). In terms of biological role, pleiotropic ABC efflux transporter that may be involved in the modulation susceptibility to a wide range of unrelated cytotoxic compounds. This chain is ABC multidrug transporter MDR2, found in Trichophyton equinum (strain ATCC MYA-4606 / CBS 127.97) (Horse ringworm fungus).